The sequence spans 324 residues: Casein kinase I (324 aa).

The region spanning 9 to 278 (YALGKKLGSG…LRRLLKDLFI (270 aa)) is the Protein kinase domain. ATP is bound by residues 15-23 (LGSGSFGDI) and K38. D128 (proton acceptor) is an active-site residue.

This sequence belongs to the protein kinase superfamily. CK1 Ser/Thr protein kinase family. Casein kinase I subfamily. Interacts with rhoptry protein RON3; the interaction is direct. Interacts with CK2alpha; the interaction is direct. Interacts with nucleosome assembly protein NAPL. Interacts with RAB5b. Interacts with host GAPVD1. Interacts with host SNX22. It depends on Mg(2+) as a cofactor.

The protein localises to the cytoplasm. The protein resides in the cytoplasmic vesicle. It is found in the secretory vesicle. Its subcellular location is the microneme. It localises to the secreted. The protein localises to the host cell surface. It catalyses the reaction L-seryl-[protein] + ATP = O-phospho-L-seryl-[protein] + ADP + H(+). The catalysed reaction is L-threonyl-[protein] + ATP = O-phospho-L-threonyl-[protein] + ADP + H(+). Functionally, serine/threonine-protein kinase likely to be involved in many cellular processes. Phosphorylates rhoptry protein RON3, nucleosome assembly protein NAPL and DNA/RNA-binding protein ALBA4 in vitro. The polypeptide is Casein kinase I (Plasmodium falciparum (isolate Dd2)).